Here is a 125-residue protein sequence, read N- to C-terminus: MARIAGVNIPTNKRVTIGLRYIYGIGETKAEEICRRLEIPAERRVNELSDDEILKIRELIDSEYRVEGDLRREVAMNIKRLMDLGCYRGLRHRRGLPVRGQRTHTNARTRKGKAVAIAGKKKATR.

Belongs to the universal ribosomal protein uS13 family. Part of the 30S ribosomal subunit. Forms a loose heterodimer with protein S19. Forms two bridges to the 50S subunit in the 70S ribosome.

Located at the top of the head of the 30S subunit, it contacts several helices of the 16S rRNA. In the 70S ribosome it contacts the 23S rRNA (bridge B1a) and protein L5 of the 50S subunit (bridge B1b), connecting the 2 subunits; these bridges are implicated in subunit movement. Contacts the tRNAs in the A and P-sites. The protein is Small ribosomal subunit protein uS13 of Gluconacetobacter diazotrophicus (strain ATCC 49037 / DSM 5601 / CCUG 37298 / CIP 103539 / LMG 7603 / PAl5).